Reading from the N-terminus, the 229-residue chain is Chromophore lyase CpcT/CpeT 1 (229 aa).

The protein belongs to the CpcT/CpeT biliprotein lyase family.

Covalently attaches a chromophore to Cys residue(s) of phycobiliproteins. In Gloeobacter violaceus (strain ATCC 29082 / PCC 7421), this protein is Chromophore lyase CpcT/CpeT 1.